Consider the following 60-residue polypeptide: Large ribosomal subunit protein bL32 (60 aa).

This sequence belongs to the bacterial ribosomal protein bL32 family.

The polypeptide is Large ribosomal subunit protein bL32 (Azotobacter vinelandii (strain DJ / ATCC BAA-1303)).